Consider the following 151-residue polypeptide: Large ribosomal subunit protein uL13 (151 aa).

This sequence belongs to the universal ribosomal protein uL13 family. As to quaternary structure, part of the 50S ribosomal subunit.

Functionally, this protein is one of the early assembly proteins of the 50S ribosomal subunit, although it is not seen to bind rRNA by itself. It is important during the early stages of 50S assembly. This Mycoplasma mycoides subsp. mycoides SC (strain CCUG 32753 / NCTC 10114 / PG1) protein is Large ribosomal subunit protein uL13.